The following is a 286-amino-acid chain: 3-methyl-2-oxobutanoate hydroxymethyltransferase (286 aa).

2 residues coordinate Mg(2+): Asp-67 and Asp-106. Residues 67-68, Asp-106, and Lys-136 each bind 3-methyl-2-oxobutanoate; that span reads DS. Glu-138 is a Mg(2+) binding site. Catalysis depends on Glu-204, which acts as the Proton acceptor.

It belongs to the PanB family. As to quaternary structure, homodecamer; pentamer of dimers. Mg(2+) is required as a cofactor.

It is found in the cytoplasm. The enzyme catalyses 3-methyl-2-oxobutanoate + (6R)-5,10-methylene-5,6,7,8-tetrahydrofolate + H2O = 2-dehydropantoate + (6S)-5,6,7,8-tetrahydrofolate. It functions in the pathway cofactor biosynthesis; (R)-pantothenate biosynthesis; (R)-pantoate from 3-methyl-2-oxobutanoate: step 1/2. Its function is as follows. Catalyzes the reversible reaction in which hydroxymethyl group from 5,10-methylenetetrahydrofolate is transferred onto alpha-ketoisovalerate to form ketopantoate. The protein is 3-methyl-2-oxobutanoate hydroxymethyltransferase of Mycobacterium leprae (strain TN).